The chain runs to 94 residues: Defensin-like protein 21 (94 aa).

Positions 1-26 (MVRTNVVSFVLFAAIVLCIGSIQIDG) are cleaved as a signal peptide. 4 cysteine pairs are disulfide-bonded: cysteine 41/cysteine 92, cysteine 51/cysteine 79, cysteine 65/cysteine 88, and cysteine 69/cysteine 90.

The protein belongs to the DEFL family.

It is found in the secreted. The protein is Defensin-like protein 21 of Arabidopsis thaliana (Mouse-ear cress).